Here is a 566-residue protein sequence, read N- to C-terminus: 4-coumarate--CoA ligase-like 6 (566 aa).

The interval Met-1–Pro-21 is disordered. ATP contacts are provided by Ser-212, Ser-213, Gly-214, Thr-215, Thr-216, and Lys-220. Residue Tyr-263 participates in (E)-4-coumaroyl-AMP binding. Arg-284 lines the CoA pocket. An SBD1 region spans residues Asp-286–Gln-356. Positions 334, 356, 357, and 361 each coordinate (E)-4-coumaroyl-AMP. 5 residues coordinate ATP: Gln-356, Gly-357, Thr-361, Asp-442, and Arg-457. The tract at residues Gly-357–Tyr-421 is SBD2. The (E)-4-coumaroyl-AMP site is built by Lys-459 and Lys-463. 2 residues coordinate CoA: Lys-465 and Gly-466. Lys-548 is a binding site for ATP. A Microbody targeting signal motif is present at residues Ser-564–Leu-566.

The protein belongs to the ATP-dependent AMP-binding enzyme family. The cofactor is Mg(2+). Expressed at very low level in leaves.

It is found in the peroxisome. It catalyses the reaction (E)-4-coumarate + ATP + CoA = (E)-4-coumaroyl-CoA + AMP + diphosphate. The enzyme catalyses (E)-4-coumarate + ATP + H(+) = (E)-4-coumaroyl-AMP + diphosphate. The catalysed reaction is (E)-4-coumaroyl-AMP + CoA = (E)-4-coumaroyl-CoA + AMP + H(+). It carries out the reaction (E)-ferulate + ATP + CoA = (E)-feruloyl-CoA + AMP + diphosphate. It catalyses the reaction (E)-ferulate + ATP + H(+) = (E)-feruloyl-AMP + diphosphate. The enzyme catalyses (E)-feruloyl-AMP + CoA = (E)-feruloyl-CoA + AMP + H(+). The catalysed reaction is (E)-caffeate + ATP + CoA = (E)-caffeoyl-CoA + AMP + diphosphate. It carries out the reaction (E)-caffeate + ATP + H(+) = (E)-caffeoyl-AMP + diphosphate. It catalyses the reaction (E)-caffeoyl-AMP + CoA = (E)-caffeoyl-CoA + AMP + H(+). The enzyme catalyses (E)-cinnamate + ATP + CoA = (E)-cinnamoyl-CoA + AMP + diphosphate. The catalysed reaction is 4-hydroxybenzoate + ATP + CoA = 4-hydroxybenzoyl-CoA + AMP + diphosphate. It carries out the reaction tetradecanoate + ATP + CoA = tetradecanoyl-CoA + AMP + diphosphate. It catalyses the reaction hexanoate + ATP + CoA = hexanoyl-CoA + AMP + diphosphate. The enzyme catalyses heptanoate + ATP + CoA = heptanoyl-CoA + AMP + diphosphate. Contributes to jasmonic acid biosynthesis by initiating the beta-oxidative chain shortening of its precursors. Acts as a carboxylate--CoA ligase that can use preferentially p-coumarate, ferulate and caffeate as substrates and, with a lower efficiency, (E)-cinnamate and 4-hydroxybenzoate as substrates. Involved in the biosynthesis of ubiquinone from phenylalanine by activating the propyl side chain of 4-coumarate, and possibly trans-cinnamate and 4-hydroxybenzoate, for subsequent beta-oxidative shortening and the formation of the benzenoid moiety of ubiquinone. Follows a two-step reaction mechanism, wherein the carboxylate substrate first undergoes adenylation by ATP, followed by a thioesterification in the presence of CoA to yield the final CoA thioester. The polypeptide is 4-coumarate--CoA ligase-like 6 (Arabidopsis thaliana (Mouse-ear cress)).